A 179-amino-acid chain; its full sequence is Protein GrpE (179 aa).

The segment at 1–45 (MSEEKLTQDPTAEEEQTETADQQESADVNWEQEAAHWKAQAEEHQ) is disordered. Over residues 33–45 (EAAHWKAQAEEHQ) the composition is skewed to basic and acidic residues.

Belongs to the GrpE family. Homodimer.

Its subcellular location is the cytoplasm. Its function is as follows. Participates actively in the response to hyperosmotic and heat shock by preventing the aggregation of stress-denatured proteins, in association with DnaK and GrpE. It is the nucleotide exchange factor for DnaK and may function as a thermosensor. Unfolded proteins bind initially to DnaJ; upon interaction with the DnaJ-bound protein, DnaK hydrolyzes its bound ATP, resulting in the formation of a stable complex. GrpE releases ADP from DnaK; ATP binding to DnaK triggers the release of the substrate protein, thus completing the reaction cycle. Several rounds of ATP-dependent interactions between DnaJ, DnaK and GrpE are required for fully efficient folding. The chain is Protein GrpE from Brevibacillus choshinensis.